A 356-amino-acid chain; its full sequence is Manganese-dependent ADP-ribose/CDP-alcohol diphosphatase (356 aa).

Zn(2+)-binding residues include aspartate 32, glutamine 34, aspartate 81, asparagine 117, histidine 253, histidine 290, and histidine 292.

It belongs to the ADPRibase-Mn family. Monomer. It depends on Mg(2+) as a cofactor.

The catalysed reaction is CDP-choline + H2O = phosphocholine + CMP + 2 H(+). It carries out the reaction ADP-D-ribose + H2O = D-ribose 5-phosphate + AMP + 2 H(+). The enzyme catalyses CDP-glycerol + H2O = sn-glycerol 3-phosphate + CMP + 2 H(+). Its function is as follows. Hydrolyzes ADP-ribose, IDP-ribose, CDP-glycerol, CDP-choline and CDP-ethanolamine, but not other non-reducing ADP-sugars or CDP-glucose. The sequence is that of Manganese-dependent ADP-ribose/CDP-alcohol diphosphatase (adprm) from Xenopus laevis (African clawed frog).